The following is a 140-amino-acid chain: T cell receptor alpha chain constant (140 aa).

Residues 19-107 (KSVCLFTDFD…LVEKSFETDT (89 aa)) enclose the Ig-like C1-type domain. The cysteines at positions 22 and 72 are disulfide-linked. Residues N32, N66, N77, and N113 are each glycosylated (N-linked (GlcNAc...) asparagine). The segment at 94–115 (CDVKLVEKSFETDTNLNFQNLS) is connecting peptide. Residues 116-138 (VIGFRILLLKVAGFNLLMTLRLW) traverse the membrane as a helical segment. The Cytoplasmic portion of the chain corresponds to 139 to 140 (SS).

In terms of assembly, alpha-beta TR is a heterodimer composed of an alpha and beta chain; disulfide-linked. The alpha-beta TR is associated with the transmembrane signaling CD3 coreceptor proteins to form the TR-CD3 (TcR or TCR). The assembly of alpha-beta TR heterodimers with CD3 occurs in the endoplasmic reticulum where a single alpha-beta TR heterodimer associates with one CD3D-CD3E heterodimer, one CD3G-CD3E heterodimer and one CD247 homodimer forming a stable octameric structure. CD3D-CD3E and CD3G-CD3E heterodimers preferentially associate with TR alpha and TR beta chains, respectively. The association of the CD247 homodimer is the last step of TcR assembly in the endoplasmic reticulum and is required for transport to the cell surface.

Its subcellular location is the cell membrane. Its function is as follows. Constant region of T cell receptor (TR) alpha chain. Alpha-beta T cell receptors are antigen specific receptors which are essential to the immune response and are present on the cell surface of T lymphocytes. Recognize peptide-major histocompatibility (MH) (pMH) complexes that are displayed by antigen presenting cells (APC), a prerequisite for efficient T cell adaptive immunity against pathogens. Binding of alpha-beta TR to pMH complex initiates TR-CD3 clustering on the cell surface and intracellular activation of LCK that phosphorylates the ITAM motifs of CD3G, CD3D, CD3E and CD247 enabling the recruitment of ZAP70. In turn, ZAP70 phosphorylates LAT, which recruits numerous signaling molecules to form the LAT signalosome. The LAT signalosome propagates signal branching to three major signaling pathways, the calcium, the mitogen-activated protein kinase (MAPK) kinase and the nuclear factor NF-kappa-B (NF-kB) pathways, leading to the mobilization of transcription factors that are critical for gene expression and essential for T cell growth and differentiation. The T cell repertoire is generated in the thymus, by V-(D)-J rearrangement. This repertoire is then shaped by intrathymic selection events to generate a peripheral T cell pool of self-MH restricted, non-autoaggressive T cells. Post-thymic interaction of alpha-beta TR with the pMH complexes shapes TR structural and functional avidity. The polypeptide is T cell receptor alpha chain constant (Homo sapiens (Human)).